The following is a 164-amino-acid chain: Galectin-3 (164 aa).

Residues 9 to 154 (STVDLSEPLK…FSDVLGVTVL (146 aa)) enclose the Galectin domain. His60, Arg64, Asn73, and Glu84 together coordinate a carbohydrate.

Homotetramer. Oligomerization is required for carbohydrate binding.

It localises to the secreted. It is found in the extracellular space. The protein resides in the extracellular matrix. The protein localises to the cell wall. Functionally, binds lactose. May play a role in fruiting body formation. This chain is Galectin-3 (Cgl3), found in Coprinopsis cinerea (strain Okayama-7 / 130 / ATCC MYA-4618 / FGSC 9003) (Inky cap fungus).